Here is a 515-residue protein sequence, read N- to C-terminus: Maturase K (515 aa).

The protein belongs to the intron maturase 2 family. MatK subfamily.

Its subcellular location is the plastid. The protein resides in the chloroplast. In terms of biological role, usually encoded in the trnK tRNA gene intron. Probably assists in splicing its own and other chloroplast group II introns. This chain is Maturase K, found in Picea engelmannii (Engelmann's spruce).